We begin with the raw amino-acid sequence, 402 residues long: Nuclear hormone receptor family member nhr-96 (402 aa).

A DNA-binding region (nuclear receptor) is located at residues 4–79; sequence FGLCAVCGQV…VGMDVKKIQQ (76 aa). 2 NR C4-type zinc fingers span residues 7–27 and 44–67; these read CAVCGQVTTGKNFGVISCRSC and CVKASCAIFENGKFKCKKCRLKRC. Positions 154-402 constitute an NR LBD domain; it reads NYYNSLELLT…FSDPEMFELT (249 aa).

Belongs to the nuclear hormone receptor family.

Its subcellular location is the nucleus. Functionally, orphan nuclear receptor. In Caenorhabditis elegans, this protein is Nuclear hormone receptor family member nhr-96 (nhr-96).